We begin with the raw amino-acid sequence, 194 residues long: 5-formyltetrahydrofolate cyclo-ligase (194 aa).

ATP contacts are provided by residues 6–10 (KSQLR), 139–146 (GRGAGFYD), and aspartate 177.

It belongs to the 5-formyltetrahydrofolate cyclo-ligase family.

It carries out the reaction (6S)-5-formyl-5,6,7,8-tetrahydrofolate + ATP = (6R)-5,10-methenyltetrahydrofolate + ADP + phosphate. It participates in one-carbon metabolism; tetrahydrofolate interconversion. Its function is as follows. Involved in the removal of 5-formyltetrahydrofolate. In vitro, it is a potent inhibitor of various folate-dependent enzymes in the C1 metabolism network and in vivo it might function as a folate storage. 5-formyltetrahydrofolate is also used as an antifolate rescue agent in cancer chemotherapy. Catalyzes the irreversible ATP-dependent transformation of 5-formyltetrahydrofolate (5-CHO-THF) to form 5,10-methenyltetrahydrofolate (5,10-CH=THF). The reverse reaction is catalyzed by the serine hydroxymethyltransferase GlyA (SHMT). The protein is 5-formyltetrahydrofolate cyclo-ligase of Mycolicibacterium smegmatis (strain ATCC 700084 / mc(2)155) (Mycobacterium smegmatis).